The following is a 297-amino-acid chain: 4-hydroxy-tetrahydrodipicolinate synthase (297 aa).

Residue Thr47 participates in pyruvate binding. The Proton donor/acceptor role is filled by Tyr136. Lys165 (schiff-base intermediate with substrate) is an active-site residue. Thr206 serves as a coordination point for pyruvate.

This sequence belongs to the DapA family. In terms of assembly, homotetramer; dimer of dimers.

The protein localises to the cytoplasm. The enzyme catalyses L-aspartate 4-semialdehyde + pyruvate = (2S,4S)-4-hydroxy-2,3,4,5-tetrahydrodipicolinate + H2O + H(+). It participates in amino-acid biosynthesis; L-lysine biosynthesis via DAP pathway; (S)-tetrahydrodipicolinate from L-aspartate: step 3/4. Functionally, catalyzes the condensation of (S)-aspartate-beta-semialdehyde [(S)-ASA] and pyruvate to 4-hydroxy-tetrahydrodipicolinate (HTPA). The polypeptide is 4-hydroxy-tetrahydrodipicolinate synthase (Sulfurovum sp. (strain NBC37-1)).